A 63-amino-acid chain; its full sequence is Large ribosomal subunit protein eL29 (63 aa).

Positions 1–26 are enriched in basic residues; sequence MAKSKNHTAHNQTRKAHRNGIKKPKT. Residues 1–35 are disordered; that stretch reads MAKSKNHTAHNQTRKAHRNGIKKPKTYKYPSLKGV.

Belongs to the eukaryotic ribosomal protein eL29 family. As to quaternary structure, component of the large ribosomal subunit. Mature ribosomes consist of a small (40S) and a large (60S) subunit. The 40S subunit contains about 32 different proteins and 1 molecule of RNA (18S). The 60S subunit contains 45 different proteins and 3 molecules of RNA (25S, 5.8S and 5S).

It localises to the cytoplasm. Component of the ribosome, a large ribonucleoprotein complex responsible for the synthesis of proteins in the cell. The small ribosomal subunit (SSU) binds messenger RNAs (mRNAs) and translates the encoded message by selecting cognate aminoacyl-transfer RNA (tRNA) molecules. The large subunit (LSU) contains the ribosomal catalytic site termed the peptidyl transferase center (PTC), which catalyzes the formation of peptide bonds, thereby polymerizing the amino acids delivered by tRNAs into a polypeptide chain. The nascent polypeptides leave the ribosome through a tunnel in the LSU and interact with protein factors that function in enzymatic processing, targeting, and the membrane insertion of nascent chains at the exit of the ribosomal tunnel. The chain is Large ribosomal subunit protein eL29 from Candida albicans (strain SC5314 / ATCC MYA-2876) (Yeast).